Reading from the N-terminus, the 574-residue chain is Serine/threonine-protein kinase fray1 (574 aa).

Residues 24 to 41 (NHHDLPDSDSDSSSREEE) are compositionally biased toward basic and acidic residues. A disordered region spans residues 24–64 (NHHDLPDSDSDSSSREEELMNSSGGGNGKEPIGEKKKLPSH). The region spanning 97 to 357 (YNLIEPIGEG…ASKLLEHKVF (261 aa)) is the Protein kinase domain. ATP-binding positions include 103–111 (IGEGTEGRV) and K126. The active-site Proton acceptor is the D221. Phosphothreonine; by autocatalysis is present on T256. Disordered regions lie at residues 381–447 (YRES…LVNM), 462–514 (LSSG…PEKE), and 532–554 (FGSP…HEHH). 3 stretches are compositionally biased toward low complexity: residues 386 to 403 (SPAS…PSSP), 418 to 441 (KNIK…NLSN), and 462 to 475 (LSSG…SSDL). Residues 478-491 (GHLHKIGTPKKKHS) are compositionally biased toward basic residues. Residues 492–506 (PSGSIGDSHGSISPP) are compositionally biased toward low complexity. Residues 536–553 (KEGDHNHQHHKSEGDHEH) are compositionally biased toward basic and acidic residues.

The protein belongs to the protein kinase superfamily. STE Ser/Thr protein kinase family. STE20 subfamily. The cofactor is Mn(2+). Undergoes autophosphorylation in the catalytic domain.

The catalysed reaction is L-seryl-[protein] + ATP = O-phospho-L-seryl-[protein] + ADP + H(+). It catalyses the reaction L-threonyl-[protein] + ATP = O-phospho-L-threonyl-[protein] + ADP + H(+). The polypeptide is Serine/threonine-protein kinase fray1 (Dictyostelium discoideum (Social amoeba)).